The following is a 394-amino-acid chain: 1-deoxy-D-xylulose 5-phosphate reductoisomerase (394 aa).

The NADPH site is built by Thr-11, Gly-12, Ser-13, Ile-14, Gly-37, Asn-39, and Asn-126. Residue Lys-127 participates in 1-deoxy-D-xylulose 5-phosphate binding. Glu-128 serves as a coordination point for NADPH. Asp-152 is a Mn(2+) binding site. 1-deoxy-D-xylulose 5-phosphate is bound by residues Ser-153, Glu-154, Ser-178, and His-201. A Mn(2+)-binding site is contributed by Glu-154. Gly-207 is a binding site for NADPH. Positions 214, 219, 220, and 223 each coordinate 1-deoxy-D-xylulose 5-phosphate. Glu-223 serves as a coordination point for Mn(2+).

It belongs to the DXR family. Mg(2+) serves as cofactor. It depends on Mn(2+) as a cofactor.

It carries out the reaction 2-C-methyl-D-erythritol 4-phosphate + NADP(+) = 1-deoxy-D-xylulose 5-phosphate + NADPH + H(+). It functions in the pathway isoprenoid biosynthesis; isopentenyl diphosphate biosynthesis via DXP pathway; isopentenyl diphosphate from 1-deoxy-D-xylulose 5-phosphate: step 1/6. Functionally, catalyzes the NADPH-dependent rearrangement and reduction of 1-deoxy-D-xylulose-5-phosphate (DXP) to 2-C-methyl-D-erythritol 4-phosphate (MEP). This Synechocystis sp. (strain ATCC 27184 / PCC 6803 / Kazusa) protein is 1-deoxy-D-xylulose 5-phosphate reductoisomerase.